The following is a 370-amino-acid chain: Platelet-derived growth factor D (370 aa).

Residues 1-18 (MHRLIFVCTLVCANFCSC) form the signal peptide. The CUB domain maps to 52-170 (RDETIQVRGN…PGFKIYYSLL (119 aa)). Cysteines 109 and 131 form a disulfide. Asparagine 276 carries N-linked (GlcNAc...) asparagine glycosylation. 2 disulfide bridges follow: cysteine 302–cysteine 360 and cysteine 306–cysteine 362.

This sequence belongs to the PDGF/VEGF growth factor family. Homodimer; disulfide-linked. Interacts with PDGFRB homodimers, and with heterodimers formed by PDGFRA and PDGFRB. Activated by proteolytic cleavage. Proteolytic removal of the N-terminal CUB domain releasing the core domain is necessary for unmasking the receptor-binding epitopes of the core domain. Cleavage after Arg-247 or Arg-249 by urokinase plasminogen activator gives rise to the active form.

It localises to the secreted. Functionally, growth factor that plays an essential role in the regulation of embryonic development, cell proliferation, cell migration, survival and chemotaxis. Potent mitogen for cells of mesenchymal origin. Plays an important role in wound healing. Induces macrophage recruitment, increased interstitial pressure, and blood vessel maturation during angiogenesis. Can initiate events that lead to a mesangial proliferative glomerulonephritis, including influx of monocytes and macrophages and production of extracellular matrix. The sequence is that of Platelet-derived growth factor D (PDGFD) from Pongo abelii (Sumatran orangutan).